A 142-amino-acid polypeptide reads, in one-letter code: Large ribosomal subunit protein uL13 (142 aa).

This sequence belongs to the universal ribosomal protein uL13 family. As to quaternary structure, part of the 50S ribosomal subunit.

In terms of biological role, this protein is one of the early assembly proteins of the 50S ribosomal subunit, although it is not seen to bind rRNA by itself. It is important during the early stages of 50S assembly. This Haemophilus influenzae (strain PittGG) protein is Large ribosomal subunit protein uL13.